The chain runs to 860 residues: Leucine-rich repeat and death domain-containing protein 1 (860 aa).

The disordered stretch occupies residues 1-103; it reads MSEKEGMSEV…TGTSQSLSSL (103 aa). A compositionally biased stretch (polar residues) spans 50-72; it reads KSSNQIYETHPRQNTLESTSSSG. Residues 90 to 103 are compositionally biased toward low complexity; sequence TSTRTGTSQSLSSL. LRR repeat units follow at residues 139–163, 164–186, 187–210, 211–233, 235–256, 257–279, 281–302, 303–325, 326–348, 350–371, 372–394, 396–417, 419–440, 441–463, 465–486, 487–510, 512–532, 533–555, 557–578, 579–601, 603–624, 627–650, 651–673, 675–696, 697–719, and 721–742; these read LGADNFTVNLEAKGLQEFPKDILKI, KYVKYLYLDKNQIKTFQGADSGD, LLGLEILSLQENGLSSLPSEIQLL, HNLRILNVSHNHISHIPKEISQL, NIRQLFFYNNYIENFPSDLECL, GNLEILSLGKNKLRHIPDTLPSL, TLRVLNLEYNQLTTFPKALCFL, PKLISLDLTGNLISSLPKEIREL, KNLETLLMDHNKLTFLAVEIFQL, KIKELQLADNKLEVISHKIENF, RELRILILDKNLLKNIPEKISCC, MLECLSLSDNKLTELPKYIHKL, NLRKLHVNRNNMVKITDCISHL, NNICSLEFSGNIITDVPIEIKNC, KIIKIELSYNKIMYFPLGLCAL, DSLYYLSVNGNYISEIPVDISFSK, LLHLELSENKLLIFSEHFCSL, INLKYLDLGKNQIKKIPASISNM, SLHVLILCCNKFETFPRELCTL, ENLQVLDLSENQLQKISSDICNL, GIQKLNFSSNQFIHFPIELCQL, LEQLNISQIKGRKLTRLPGELSNM, TQLKELDISNNAIREIPRNIGEL, NLVSLHAYNNQISYLPPSLLSL, NDLQQLNLSGNNLTALPSAIYNI, and SLKEINFDDNPLLRPPVEICKG. The region spanning 764-852 is the Death domain; the sequence is EKIFKIVANN…EIMDKITALN (89 aa). Residues 856 to 860 form an LRR 27 repeat; the sequence is RAIKF.

The chain is Leucine-rich repeat and death domain-containing protein 1 (LRRD1) from Homo sapiens (Human).